Reading from the N-terminus, the 348-residue chain is RNA 3'-terminal phosphate cyclase (348 aa).

ATP contacts are provided by residues Gln107 and 290–294; that span reads HLADQ. His316 acts as the Tele-AMP-histidine intermediate in catalysis.

Belongs to the RNA 3'-terminal cyclase family. Type 1 subfamily.

Its subcellular location is the cytoplasm. It catalyses the reaction a 3'-end 3'-phospho-ribonucleotide-RNA + ATP = a 3'-end 2',3'-cyclophospho-ribonucleotide-RNA + AMP + diphosphate. Its function is as follows. Catalyzes the conversion of 3'-phosphate to a 2',3'-cyclic phosphodiester at the end of RNA. The mechanism of action of the enzyme occurs in 3 steps: (A) adenylation of the enzyme by ATP; (B) transfer of adenylate to an RNA-N3'P to produce RNA-N3'PP5'A; (C) and attack of the adjacent 2'-hydroxyl on the 3'-phosphorus in the diester linkage to produce the cyclic end product. The biological role of this enzyme is unknown but it is likely to function in some aspects of cellular RNA processing. The polypeptide is RNA 3'-terminal phosphate cyclase (rtcA) (Nostoc sp. (strain PCC 7120 / SAG 25.82 / UTEX 2576)).